A 136-amino-acid chain; its full sequence is Keratin-associated protein 4-2 (136 aa).

20 consecutive repeat copies span residues 5–9 (CCGSV), 20–24 (CCRPS), 25–29 (CCQTT), 30–34 (CCRTT), 35–39 (CCRPS), 40–44 (CCVSS), 45–49 (CCRPQ), 50–54 (CCQSV), 55–59 (CCQPT), 60–64 (CCSPS), 65–69 (CCQTT), 70–74 (CCRTT), 75–79 (CCRPS), 80–84 (CCVSS), 90–94 (CCQSV), 95–99 (YCQPT), 100–104 (CCRPS), 110–114 (CCRTT), 120–124 (CCVST), and 125–129 (CCRPT). Positions 5 to 129 (CCGSVCSDQG…CCVSTCCRPT (125 aa)) are 20 X 5 AA repeats OF C-C-[GRQVS]-[SPT]-[VSTQ].

The protein belongs to the KRTAP type 4 family. As to quaternary structure, interacts with hair keratins.

Its function is as follows. In the hair cortex, hair keratin intermediate filaments are embedded in an interfilamentous matrix, consisting of hair keratin-associated proteins (KRTAP), which are essential for the formation of a rigid and resistant hair shaft through their extensive disulfide bond cross-linking with abundant cysteine residues of hair keratins. The matrix proteins include the high-sulfur and high-glycine-tyrosine keratins. The polypeptide is Keratin-associated protein 4-2 (KRTAP4-2) (Homo sapiens (Human)).